We begin with the raw amino-acid sequence, 76 residues long: Putative membrane protein insertion efficiency factor (76 aa).

It belongs to the UPF0161 family.

The protein localises to the cell inner membrane. Functionally, could be involved in insertion of integral membrane proteins into the membrane. The protein is Putative membrane protein insertion efficiency factor of Anaeromyxobacter dehalogenans (strain 2CP-C).